The chain runs to 163 residues: Augmin complex subunit wac (163 aa).

Positions 86-115 form a coiled coil; sequence ELQRILSSIEEATRDVVMLERFNAAAEERL.

In terms of assembly, component of the augmin complex composed of dgt2, dgt3, dgt4, dgt5, dgt6, msd1, msd5 and wac. The complex interacts directly or indirectly with microtubules and is required for centrosome-independent generation of spindle microtubules. wac interacts directly (via coiled coil) with dgt2. In terms of tissue distribution, in adult females, detected only in the abdomen with no expression in the head or thorax (at protein level).

It localises to the cytoplasm. The protein resides in the cytoskeleton. The protein localises to the spindle. Its subcellular location is the spindle pole. As part of the augmin complex, plays a role in centrosome-independent generation of spindle microtubules. The complex is required for mitotic spindle assembly through its involvement in localizing gamma-tubulin to spindle microtubules. wac is dispensable for somatic mitosis and for assembly of spindle microtubules in oocytes during female meiosis but is required during female meiosis for chromosome alignment and segregation. It is required for microtubule assembly near spindle poles in oocytes. It is also required for acentrosomal microtubule nucleation and meiotic spindle formation during male meiosis. wac binds to microtubules in vitro. In Drosophila melanogaster (Fruit fly), this protein is Augmin complex subunit wac.